A 317-amino-acid chain; its full sequence is Ribosomal RNA small subunit methyltransferase H (317 aa).

Residues Ala37–His39, Asp56, Phe85, Asp106, and Gln113 each bind S-adenosyl-L-methionine.

It belongs to the methyltransferase superfamily. RsmH family.

The protein localises to the cytoplasm. The catalysed reaction is cytidine(1402) in 16S rRNA + S-adenosyl-L-methionine = N(4)-methylcytidine(1402) in 16S rRNA + S-adenosyl-L-homocysteine + H(+). Specifically methylates the N4 position of cytidine in position 1402 (C1402) of 16S rRNA. The chain is Ribosomal RNA small subunit methyltransferase H from Lactococcus lactis subsp. cremoris (strain SK11).